The primary structure comprises 799 residues: Heat shock protein 90-6, mitochondrial (799 aa).

A mitochondrion-targeting transit peptide spans 1–48; the sequence is MIRLSKRSVSTLLRSGNQSFRIAAAASTSRSSPSATDVKRSDTESRWY. The span at 23–35 shows a compositional bias: low complexity; it reads AAAASTSRSSPSA. The disordered stretch occupies residues 23 to 61; that stretch reads AAAASTSRSSPSATDVKRSDTESRWYSSLTNGQSKNSGS. The span at 46–61 shows a compositional bias: polar residues; that stretch reads RWYSSLTNGQSKNSGS. ATP-binding positions include Glu124, Asn128, Asp170, Met175, 190 to 191, 214 to 219, and Thr269; these read SG and QFGVGF. A disordered region spans residues 314–337; sequence EVEVEDDPTETKKDDQDDQTEKKK. A compositionally biased stretch (basic and acidic residues) spans 322-334; that stretch reads TETKKDDQDDQTE. Residue Arg464 participates in ATP binding. Positions 766-777 are enriched in polar residues; sequence SPEVQPQQQQMA. Residues 766 to 799 are disordered; sequence SPEVQPQQQQMAHSHDAETFEAEVVEPVEVDGKK. Residues 784-799 are compositionally biased toward acidic residues; that stretch reads TFEAEVVEPVEVDGKK.

The protein belongs to the heat shock protein 90 family. Interacts with P23-1.

The protein resides in the mitochondrion. In terms of biological role, molecular chaperone which stabilizes unfolding protein intermediates and functions as a folding molecular chaperone that assists the non-covalent folding of proteins in an ATP-dependent manner. In Arabidopsis thaliana (Mouse-ear cress), this protein is Heat shock protein 90-6, mitochondrial.